The primary structure comprises 967 residues: Leucine-rich repeat receptor-like protein kinase PXC2 (967 aa).

Residues 1 to 20 (MFNGAVSLLFLFLAVVSARA) form the signal peptide. Residues 21-609 (DPTFNDDVLG…QIRKSVLSIS (589 aa)) lie on the Extracellular side of the membrane. 11 LRR repeats span residues 91 to 114 (LQFL…EFPH), 115 to 139 (LGSL…FFEQ), 141 to 164 (GSLR…LSYC), 165 to 189 (STLT…WFLK), 191 to 212 (LKSL…LGGL), 214 to 236 (DLRH…IGRC), 237 to 260 (SSLK…MKSL), 262 to 284 (SCSS…IGDI), 285 to 307 (ATLE…SLGN), 308 to 332 (LEFL…LSNC), and 334 to 356 (NLIS…MFTG). Residues asparagine 103 and asparagine 127 are each glycosylated (N-linked (GlcNAc...) asparagine). N-linked (GlcNAc...) asparagine glycosylation is present at asparagine 171. An N-linked (GlcNAc...) asparagine glycan is attached at asparagine 219. 3 N-linked (GlcNAc...) asparagine glycosylation sites follow: asparagine 296, asparagine 315, and asparagine 331. Asparagine 374 carries N-linked (GlcNAc...) asparagine glycosylation. 7 LRR repeats span residues 384–408 (LQGL…IWIL), 410–432 (SLLQ…IGGL), 433–456 (KVAE…IGGA), 457–480 (VSLK…ISNC), 482–503 (ALNT…SIGS), 504–528 (LSNL…IEKL), and 530–552 (HLLT…GFFN). N-linked (GlcNAc...) asparagine glycans are attached at residues asparagine 415, asparagine 446, asparagine 479, asparagine 487, asparagine 516, asparagine 535, asparagine 540, asparagine 571, and asparagine 587. Residues 610-630 (ALIAIGAAAVIAIGVVAVTLL) form a helical membrane-spanning segment. Over 631–967 (NVHARSSVSR…LIQCPSHDLE (337 aa)) the chain is Cytoplasmic. The region spanning 687-959 (LNKDSELGRG…EEVVKILELI (273 aa)) is the Protein kinase domain. Residues 693–701 (LGRGGFGVV) and lysine 715 contribute to the ATP site.

It belongs to the protein kinase superfamily. Ser/Thr protein kinase family. As to expression, expressed in the vascular strands of cotyledons, the shoot apex, hypocotyls, roots, leaves, stems and flowers.

The protein localises to the cell membrane. Leucine-rich repeat receptor-like protein kinase that may play a role in vascular tissues development. In Arabidopsis thaliana (Mouse-ear cress), this protein is Leucine-rich repeat receptor-like protein kinase PXC2.